The sequence spans 143 residues: Host transcription reprogramming factor 8 (143 aa).

The N-terminal stretch at 1–19 (MHTYKFIQIALLFASVALA) is a signal peptide. Over residues 24–34 (PSPPNPPPVPQ) the composition is skewed to pro residues. Residues 24-43 (PSPPNPPPVPQLPNSETKSN) form a disordered region. The C2H2-type 1 zinc finger occupies 48-71 (HSCEFCGVVKPSGPAYLEHYHQNH). Residues 77-99 (GKLATPSPPNPPPVPTQKVETHA) are disordered. The span at 82–91 (PSPPNPPPVP) shows a compositional bias: pro residues. Residues 103–126 (HGCEWCNKVEPSGPAYIKHYKENH) form a C2H2-type 2 zinc finger.

The protein resides in the secreted. Its subcellular location is the host nucleus. Probable secreted effector that translocates into the nuclei of host cells to reprogram the expression of targeted genes by binding on effector binding elements in rice. This chain is Host transcription reprogramming factor 8, found in Pyricularia oryzae (strain 70-15 / ATCC MYA-4617 / FGSC 8958) (Rice blast fungus).